A 1136-amino-acid polypeptide reads, in one-letter code: Receptor-type guanylate cyclase gcy-4 (1136 aa).

Residues 1–21 (MRQLNYYIFISTILTYNLTHG) form the signal peptide. The Extracellular segment spans residues 22 to 485 (QGPRPVIRVG…CPLPIFEQYR (464 aa)). Asn40, Asn194, Asn252, Asn351, Asn377, Asn386, and Asn438 each carry an N-linked (GlcNAc...) asparagine glycan. A helical transmembrane segment spans residues 486 to 506 (ALVIVAIAVTILILLAIIICM). Residues 507–1136 (SSKIRNRRVE…LRREMMRVEV (630 aa)) are Cytoplasmic-facing. The 301-residue stretch at 533-833 (LPMHRRASKS…EDNLMDHVFS (301 aa)) folds into the Protein kinase domain. A disordered region spans residues 536-565 (HRRASKSSQESETESASETENFTSKSGDTM). A Guanylate cyclase domain is found at 891-1021 (TVFFSDLVKF…DTVNTASRME (131 aa)).

Belongs to the adenylyl cyclase class-4/guanylyl cyclase family. Expression is biased toward ASE right (ASER) sensory neuron.

It localises to the cell membrane. The enzyme catalyses GTP = 3',5'-cyclic GMP + diphosphate. Guanylate cyclase involved in the production of the second messenger cGMP. Regulates chemotaxis responses toward Br(1-) and I(1-) salt ions in ASE right (ASER) sensory neuron. The chain is Receptor-type guanylate cyclase gcy-4 from Caenorhabditis elegans.